We begin with the raw amino-acid sequence, 48 residues long: ATP synthase protein 8 (48 aa).

Residues 4 to 24 (LVPFFFVNQVVFAFIVLTVLI) traverse the membrane as a helical segment.

The protein belongs to the ATPase protein 8 family. As to quaternary structure, F-type ATPases have 2 components, CF(1) - the catalytic core - and CF(0) - the membrane proton channel.

It localises to the mitochondrion membrane. Mitochondrial membrane ATP synthase (F(1)F(0) ATP synthase or Complex V) produces ATP from ADP in the presence of a proton gradient across the membrane which is generated by electron transport complexes of the respiratory chain. F-type ATPases consist of two structural domains, F(1) - containing the extramembraneous catalytic core and F(0) - containing the membrane proton channel, linked together by a central stalk and a peripheral stalk. During catalysis, ATP synthesis in the catalytic domain of F(1) is coupled via a rotary mechanism of the central stalk subunits to proton translocation. Part of the complex F(0) domain. Minor subunit located with subunit a in the membrane. In Emericella nidulans (Aspergillus nidulans), this protein is ATP synthase protein 8 (atp8).